Here is a 332-residue protein sequence, read N- to C-terminus: tRNA-dihydrouridine synthase B (332 aa).

Residues 16 to 18 and glutamine 70 each bind FMN; that span reads PMA. The Proton donor role is filled by cysteine 100. Residues lysine 139, 200–202, and 224–225 contribute to the FMN site; these read NGD and GR.

This sequence belongs to the Dus family. DusB subfamily. Requires FMN as cofactor.

The enzyme catalyses a 5,6-dihydrouridine in tRNA + NAD(+) = a uridine in tRNA + NADH + H(+). It catalyses the reaction a 5,6-dihydrouridine in tRNA + NADP(+) = a uridine in tRNA + NADPH + H(+). Functionally, catalyzes the synthesis of 5,6-dihydrouridine (D), a modified base found in the D-loop of most tRNAs, via the reduction of the C5-C6 double bond in target uridines. The chain is tRNA-dihydrouridine synthase B from Xanthomonas axonopodis pv. citri (strain 306).